The sequence spans 218 residues: Cold-regulated protein 28 (218 aa).

Disordered regions lie at residues 1 to 51 and 166 to 218; these read MEND…ADSK and TKHS…KPRT. The span at 20 to 37 shows a compositional bias: low complexity; sequence EASAESQSESTLSNSLDS. The segment covering 186-207 has biased composition (basic and acidic residues); the sequence is GEVSKKREREANNDDSSLKEDQ.

The protein localises to the nucleus. In terms of biological role, together with COR27, involved in central circadian clock regulation and in flowering promotion, by binding to the chromatin of clock-associated evening genes TOC1, PRR5, ELF4 and cold-responsive genes in order to repress their transcription. Negative regulator of freezing tolerance. The polypeptide is Cold-regulated protein 28 (Arabidopsis thaliana (Mouse-ear cress)).